We begin with the raw amino-acid sequence, 590 residues long: Peroxisomal targeting signal receptor (590 aa).

Residue Cys-6 forms a Glycyl cysteine thioester (Cys-Gly) (interchain with G-Cter in ubiquitin) linkage. Residues 7–29 (SVGSNPLAQLNKHAQGQGSSLSN) are amphipathic helix 1 (AH1). Residue Lys-18 forms a Glycyl lysine isopeptide (Lys-Gly) (interchain with G-Cter in ubiquitin) linkage. Residues 18–30 (KHAQGQGSSLSNT) show a composition bias toward polar residues. The disordered stretch occupies residues 18 to 45 (KHAQGQGSSLSNTHVRHSGGVSGSNVFR). The amphipathic helix 2 (AH2) stretch occupies residues 56–74 (RQQLNSFMSQPMRLGEDKM). 3 short sequence motifs (wxxxF/Y motif) span residues 108–112 (WTREF), 139–143 (WKFRY), and 178–182 (WNDKF). Residues 227 to 243 (FQEVWDSIQQDTEEMLS) form an amphipathic helix 4 (AH4) region. TPR repeat units follow at residues 285–319 (NPNA…DPKH), 320–353 (VDAW…DPNN), 424–457 (PDIQ…NPND), 459–491 (LMWN…KPSF), and 493–525 (RARY…HDVE).

The protein belongs to the peroxisomal targeting signal receptor family. Interacts (via WxxxF/Y and LVxEF motifs) with PEX14; promoting translocation through the PEX13-PEX14 docking complex. In terms of processing, monoubiquitinated at Cys-6 by PEX2 during PEX5 passage through the retrotranslocation channel: monoubiquitination acts as a signal for PEX5 extraction and is required for proper export from peroxisomes and recycling. When PEX5 recycling is compromised, polyubiquitinated at Lys-18 by PEX10 during its passage through the retrotranslocation channel, leading to its degradation.

The protein resides in the cytoplasm. The protein localises to the cytosol. It is found in the peroxisome matrix. Its function is as follows. Receptor that mediates peroxisomal import of proteins containing a C-terminal PTS1-type tripeptide peroxisomal targeting signal (SKL-type). Binds to cargo proteins containing a PTS1 peroxisomal targeting signal in the cytosol, and translocates them into the peroxisome matrix by passing through the PEX13-PEX14 docking complex along with cargo proteins. PEX5 receptor is then retrotranslocated into the cytosol, leading to release of bound cargo in the peroxisome matrix, and reset for a subsequent peroxisome import cycle. The sequence is that of Peroxisomal targeting signal receptor (PEX5) from Candida glabrata (strain ATCC 2001 / BCRC 20586 / JCM 3761 / NBRC 0622 / NRRL Y-65 / CBS 138) (Yeast).